Here is a 172-residue protein sequence, read N- to C-terminus: Photosystem I assembly protein Ycf3 (172 aa).

TPR repeat units follow at residues 35–70 (AFTYYRDGAIMSAQSEGNYAEALQNYYEATRSEIDP), 74–107 (SYILYNIGLIHTSNGEHTKALEYYFQAIERNPFL), and 122–155 (GERAILRGDSEIAEAWFDQAAEYWKQAIGLTPGN).

It belongs to the Ycf3 family.

The protein localises to the plastid. It is found in the chloroplast thylakoid membrane. Essential for the assembly of the photosystem I (PSI) complex. May act as a chaperone-like factor to guide the assembly of the PSI subunits. The chain is Photosystem I assembly protein Ycf3 from Dioscorea elephantipes (Elephant's foot yam).